A 100-amino-acid chain; its full sequence is Large ribosomal subunit protein uL23 (100 aa).

It belongs to the universal ribosomal protein uL23 family. Part of the 50S ribosomal subunit. Contacts protein L29, and trigger factor when it is bound to the ribosome.

In terms of biological role, one of the early assembly proteins it binds 23S rRNA. One of the proteins that surrounds the polypeptide exit tunnel on the outside of the ribosome. Forms the main docking site for trigger factor binding to the ribosome. The protein is Large ribosomal subunit protein uL23 of Shewanella pealeana (strain ATCC 700345 / ANG-SQ1).